Consider the following 349-residue polypeptide: [LysW]-L-2-aminoadipate/[LysW]-L-glutamate phosphate reductase (349 aa).

Position 10 to 13 (10 to 13) interacts with NADP(+); the sequence is SGYT. C150 is an active-site residue. N316 contacts NADP(+).

The protein belongs to the NAGSA dehydrogenase family. Type 1 subfamily. LysY sub-subfamily.

Its subcellular location is the cytoplasm. It catalyses the reaction [amino-group carrier protein]-C-terminal-N-(1-carboxy-5-oxopentan-1-yl)-L-glutamine + phosphate + NADP(+) = [amino-group carrier protein]-C-terminal-N-(1-carboxy-5-phosphooxy-5-oxopentan-1-yl)-L-glutamine + NADPH + H(+). The catalysed reaction is [amino-group carrier protein]-C-terminal-gamma-(L-glutamyl-5-semialdehyde)-L-glutamate + phosphate + NADP(+) = [amino-group carrier protein]-C-terminal-gamma-(5-phospho-L-glutamyl)-L-glutamate + NADPH + H(+). Its pathway is amino-acid biosynthesis; L-lysine biosynthesis via AAA pathway; L-lysine from L-alpha-aminoadipate (Thermus route): step 3/5. It participates in amino-acid biosynthesis; L-arginine biosynthesis. Involved in both the arginine and lysine biosynthetic pathways. This is [LysW]-L-2-aminoadipate/[LysW]-L-glutamate phosphate reductase from Sulfurisphaera tokodaii (strain DSM 16993 / JCM 10545 / NBRC 100140 / 7) (Sulfolobus tokodaii).